The primary structure comprises 598 residues: uncharacterized protein (598 aa).

Positions methionine 1–arginine 23 are enriched in basic and acidic residues. 3 disordered regions span residues methionine 1–valine 32, phenylalanine 151–arginine 190, and proline 222–serine 241. A compositionally biased stretch (basic and acidic residues) spans glutamate 225–arginine 235. Phosphoserine occurs at positions 238 and 242. Disordered regions lie at residues arginine 366–arginine 396 and alanine 551–proline 571. Polar residues-rich tracts occupy residues glutamine 369–alanine 386 and alanine 558–serine 569.

This is an uncharacterized protein from Mus musculus (Mouse).